We begin with the raw amino-acid sequence, 589 residues long: MFDHDVEYLITALSSETRIQYDQRLLDEIAANVVYYVPRVKSPDTLYRLVGALFRSQFIVQLPPLRLLHIVKDVFLWKLEVSEPTLPISKFYLVWNAVFESHRATWNLSQLMVLDGVLVTYPSFKQLNNAYFIDESSNKTALYYRNWKLQLFSPIWAQLWNTAIVRANLSIQHCLLIALALLFNQSNRSALLHGVDVSWNLVTEKLLDLLEEYVHGIVQPMEIFSTDSVLSTNLNHLASCLTSSITRSNEATLVNSVRKLERICRYLSDTVASLKEQQLDFKFQNVFILIILALKELSAMNMTILPNHKDTFYSMICLSLFHVHVLTQKIGTVGFPSYDYVYDNLVTYFIVMDDLSKITTVLELMKRNNTKQDPNKLVFYINFLNKITNYYGCRIRLPFITEFIEPLLHFDVFFSGKTGNTLDIEIKESIHTLTITVLSIDSSYSSQVAQWQVSRILVYLKMSMDQFIAGKLSANQILLIFGHLSTQLPSLHNYNKHLLRDSLHETYIRIVNVKNPEKKNVLIECLIVQIAFINNPHHLIGWLNICLQLINTHNKKLLQQLWEMVSSLESSLAIDWWYTTVLSSQSSKL.

A Microbody targeting signal motif is present at residues Ser-587–Leu-589.

Its subcellular location is the peroxisome matrix. In terms of biological role, required for peroxisome assembly. The protein is Peroxisomal biogenesis factor 8 (PEX8) of Saccharomyces cerevisiae (strain ATCC 204508 / S288c) (Baker's yeast).